The following is a 276-amino-acid chain: NH(3)-dependent NAD(+) synthetase (276 aa).

43–50 (GISGGVDS) serves as a coordination point for ATP. Residue Asp-49 coordinates Mg(2+). Residue Arg-146 participates in deamido-NAD(+) binding. ATP is bound at residue Thr-166. Residue Glu-171 participates in Mg(2+) binding. Deamido-NAD(+)-binding residues include Lys-179 and Asp-186. ATP-binding residues include Lys-195 and Thr-217. Deamido-NAD(+) is bound at residue 266–267 (HK).

It belongs to the NAD synthetase family. In terms of assembly, homodimer.

The catalysed reaction is deamido-NAD(+) + NH4(+) + ATP = AMP + diphosphate + NAD(+) + H(+). The protein operates within cofactor biosynthesis; NAD(+) biosynthesis; NAD(+) from deamido-NAD(+) (ammonia route): step 1/1. In terms of biological role, catalyzes the ATP-dependent amidation of deamido-NAD to form NAD. Uses ammonia as a nitrogen source. The chain is NH(3)-dependent NAD(+) synthetase from Aliivibrio fischeri (strain ATCC 700601 / ES114) (Vibrio fischeri).